The sequence spans 1194 residues: ATP-dependent RNA helicase DHX30 (1194 aa).

Residues 1-10 (MFSLDSFRKD) show a composition bias toward basic and acidic residues. The tract at residues 1–27 (MFSLDSFRKDRAQHRQRQCKLPPPRLP) is disordered. S6 carries the phosphoserine modification. One can recognise a DRBM domain in the interval 53-121 (PKNLLNSVIG…QAAAAACQLF (69 aa)). The tract at residues 150 to 199 (ADSWWRPEPTMPPTSWRQLNPESIRPGGPGGLSRSLGREEEEDEEEELEE) is disordered. Positions 188–199 (EEEEDEEEELEE) are enriched in acidic residues. Residues S226 and S380 each carry the phosphoserine modification. The region spanning 444 to 612 (LNAIEQHPVV…FGGCPVIKVP (169 aa)) is the Helicase ATP-binding domain. ATP is bound at residue 457–464 (GDTGCGKT). A DEAH box motif is present at residues 559–562 (DEVH). Positions 654-827 (LVTDLVLHID…NLVLQAKIHM (174 aa)) constitute a Helicase C-terminal domain.

This sequence belongs to the DEAD box helicase family. DEAH subfamily. As to quaternary structure, identified in a complex with TFAM and SSBP1. Interacts (via N-terminus) with ZC3HAV1 (via N-terminal domain) in an RNA-independent manner. Found in a complex with GRSF1, DDX28, FASTKD2 and FASTKD5.

It is found in the cytoplasm. It localises to the mitochondrion. The protein localises to the mitochondrion matrix. Its subcellular location is the mitochondrion nucleoid. It catalyses the reaction ATP + H2O = ADP + phosphate + H(+). Its function is as follows. RNA-dependent helicase. Plays an important role in the assembly of the mitochondrial large ribosomal subunit. Required for optimal function of the zinc-finger antiviral protein ZC3HAV1. Associates with mitochondrial DNA. Involved in nervous system development and differentiation through its involvement in the up-regulation of a number of genes which are required for neurogenesis, including GSC, NCAM1, neurogenin, and NEUROD. The polypeptide is ATP-dependent RNA helicase DHX30 (DHX30) (Pongo abelii (Sumatran orangutan)).